Here is an 827-residue protein sequence, read N- to C-terminus: WD repeat-containing protein 27 (827 aa).

WD repeat units follow at residues 3 to 57 (NPQD…IWNT), 62 to 101 (HQLL…MWNL), 112 to 151 (LVPR…MLDI), 155 to 194 (AVRA…VWDH), 201 to 237 (YSSS…IFSL), 292 to 337 (FPVL…LANL), 344 to 387 (YYKD…VLEI), 502 to 542 (KPGP…VFDA), 546 to 584 (GTPA…MWSA), 590 to 629 (ALLL…RYHI), 646 to 687 (KLIC…VFDL), 698 to 740 (EAHS…LWDL), 746 to 784 (ERHF…VYEM), and 788 to 826 (TFSH…LFLA).

The chain is WD repeat-containing protein 27 (WDR27) from Homo sapiens (Human).